The primary structure comprises 440 residues: NADH-quinone oxidoreductase subunit D 1 (440 aa).

Belongs to the complex I 49 kDa subunit family. NDH-1 is composed of 14 different subunits. Subunits NuoB, C, D, E, F, and G constitute the peripheral sector of the complex.

It localises to the cell membrane. The catalysed reaction is a quinone + NADH + 5 H(+)(in) = a quinol + NAD(+) + 4 H(+)(out). In terms of biological role, NDH-1 shuttles electrons from NADH, via FMN and iron-sulfur (Fe-S) centers, to quinones in the respiratory chain. The immediate electron acceptor for the enzyme in this species is believed to be a menaquinone. Couples the redox reaction to proton translocation (for every two electrons transferred, four hydrogen ions are translocated across the cytoplasmic membrane), and thus conserves the redox energy in a proton gradient. This Streptomyces griseus subsp. griseus (strain JCM 4626 / CBS 651.72 / NBRC 13350 / KCC S-0626 / ISP 5235) protein is NADH-quinone oxidoreductase subunit D 1.